Consider the following 309-residue polypeptide: UDP-N-acetylenolpyruvoylglucosamine reductase (309 aa).

Positions 34–221 constitute an FAD-binding PCMH-type domain; it reads RVGGPAQVLF…TAAREAAQPI (188 aa). The active site involves R179. S228 serves as the catalytic Proton donor. Residue E298 is part of the active site.

The protein belongs to the MurB family. Requires FAD as cofactor.

It is found in the cytoplasm. It catalyses the reaction UDP-N-acetyl-alpha-D-muramate + NADP(+) = UDP-N-acetyl-3-O-(1-carboxyvinyl)-alpha-D-glucosamine + NADPH + H(+). It participates in cell wall biogenesis; peptidoglycan biosynthesis. Functionally, cell wall formation. This is UDP-N-acetylenolpyruvoylglucosamine reductase from Methylorubrum extorquens (strain CM4 / NCIMB 13688) (Methylobacterium extorquens).